The primary structure comprises 149 residues: UPF0310 protein SSO2595 (149 aa).

Belongs to the UPF0310 family.

The sequence is that of UPF0310 protein SSO2595 from Saccharolobus solfataricus (strain ATCC 35092 / DSM 1617 / JCM 11322 / P2) (Sulfolobus solfataricus).